The following is a 103-amino-acid chain: MANQKIRIRLKAYDYALIDRFAQEIVETAKRTGAVVKGPIPLPTKIERFNILRSPHMNKTSREQLEIRTHLRLMDIVDWTDKTTDALMKLDLPAGVDVEIKVQ.

The protein belongs to the universal ribosomal protein uS10 family. Part of the 30S ribosomal subunit.

Functionally, involved in the binding of tRNA to the ribosomes. This is Small ribosomal subunit protein uS10 from Neisseria gonorrhoeae (strain NCCP11945).